The primary structure comprises 569 residues: Isocitrate dehydrogenase kinase/phosphatase (569 aa).

ATP contacts are provided by residues 316 to 322 (APGVRGM) and lysine 337. Aspartate 372 is an active-site residue.

The protein belongs to the AceK family.

The protein localises to the cytoplasm. It catalyses the reaction L-seryl-[isocitrate dehydrogenase] + ATP = O-phospho-L-seryl-[isocitrate dehydrogenase] + ADP + H(+). Bifunctional enzyme which can phosphorylate or dephosphorylate isocitrate dehydrogenase (IDH) on a specific serine residue. This is a regulatory mechanism which enables bacteria to bypass the Krebs cycle via the glyoxylate shunt in response to the source of carbon. When bacteria are grown on glucose, IDH is fully active and unphosphorylated, but when grown on acetate or ethanol, the activity of IDH declines drastically concomitant with its phosphorylation. This is Isocitrate dehydrogenase kinase/phosphatase from Pseudomonas putida (strain W619).